The sequence spans 451 residues: D-ribitol-5-phosphate cytidylyltransferase (451 aa).

The disordered stretch occupies residues 1–29; it reads MEAGPPGSARPAEPGPCLSGQRGADHTAS.

Belongs to the IspD/TarI cytidylyltransferase family. IspD subfamily. Homodimer. Ubiquitously expressed, with high expression in brain.

The protein localises to the cytoplasm. It localises to the cytosol. The catalysed reaction is D-ribitol 5-phosphate + CTP + H(+) = CDP-L-ribitol + diphosphate. It carries out the reaction D-ribose 5-phosphate + CTP + H(+) = CDP-D-ribose + diphosphate. The enzyme catalyses D-ribulose 5-phosphate + CTP + H(+) = CDP-D-ribulose + diphosphate. It participates in protein modification; protein glycosylation. Cytidylyltransferase required for protein O-linked mannosylation. Catalyzes the formation of CDP-ribitol nucleotide sugar from D-ribitol 5-phosphate. CDP-ribitol is a substrate of FKTN during the biosynthesis of the phosphorylated O-mannosyl trisaccharide (N-acetylgalactosamine-beta-3-N-acetylglucosamine-beta-4-(phosphate-6-)mannose), a carbohydrate structure present in alpha-dystroglycan (DAG1), which is required for binding laminin G-like domain-containing extracellular proteins with high affinity. Shows activity toward other pentose phosphate sugars and mediates formation of CDP-ribulose or CDP-ribose using CTP and ribulose-5-phosphate or ribose-5-phosphate, respectively. Not Involved in dolichol production. This chain is D-ribitol-5-phosphate cytidylyltransferase, found in Homo sapiens (Human).